An 86-amino-acid polypeptide reads, in one-letter code: Large ribosomal subunit protein bL31B (86 aa).

This sequence belongs to the bacterial ribosomal protein bL31 family. Type B subfamily. In terms of assembly, part of the 50S ribosomal subunit.

The protein is Large ribosomal subunit protein bL31B of Cupriavidus taiwanensis (strain DSM 17343 / BCRC 17206 / CCUG 44338 / CIP 107171 / LMG 19424 / R1) (Ralstonia taiwanensis (strain LMG 19424)).